Reading from the N-terminus, the 268-residue chain is GTP cyclohydrolase FolE2 (268 aa).

The protein belongs to the GTP cyclohydrolase IV family.

It carries out the reaction GTP + H2O = 7,8-dihydroneopterin 3'-triphosphate + formate + H(+). Its pathway is cofactor biosynthesis; 7,8-dihydroneopterin triphosphate biosynthesis; 7,8-dihydroneopterin triphosphate from GTP: step 1/1. Functionally, converts GTP to 7,8-dihydroneopterin triphosphate. This chain is GTP cyclohydrolase FolE2, found in Janthinobacterium sp. (strain Marseille) (Minibacterium massiliensis).